The following is a 246-amino-acid chain: DNA repair protein RecO (246 aa).

The protein belongs to the RecO family.

In terms of biological role, involved in DNA repair and RecF pathway recombination. In Alkaliphilus metalliredigens (strain QYMF), this protein is DNA repair protein RecO.